Reading from the N-terminus, the 897-residue chain is MNAMSTLPVPRDRTFPSSEGATPMMQQFLELRAQAPADALLFYRMGDFYELFFDDAVRASAALDIALTKRGEHQGEPISMCGVPAATAEAYLARLIKAGFKVAVGEQMEDPKTAKARGGSKAVVRRAITRVVTPGTLTEDSLLDPRVSNRIAALAQLVTGEAALAWADVSTGDFRVSPVATENLAAEIAAMSPAELLVEERGFAEAAMLAPRSTLTPLPKAKFDPSSAERQLKDQFRVQELTAFGNFTKAECAALGALLDYLSLSQAGAPAKLAPPRQVAAGACLAIDPATRASLEIERTLSGSRQGSLLDAIDRTVTAPGARKLAERLARPLTNVAEIEARLDAIAWFERARPERRDLRDRLRQAGDAERALSRLLLGRGGPRDLKSLAAALQEGEIIASRLLDRTLDTPPTLISEGLEALVLGDKPELAELIAELERAIVDEPPLLARDGGFIAEGWQVELDELRQLRDASRRVVAGLQQTYAEAVGVSALKIKHNNVLGYFVEVTAKHGDALMGDDRFIHRQTMANAIRFSTTELAELEAKIASAGDRALAMEIDAFAGLRDRVEAQADLIRGAARALAEFDVAASLAEWAEDSEAARPVMSQDSVFHIEGGRHPVVERALAKAGDGRFTPNDCHLDGAGEEAKRLTFVTGPNMAGKSTFLRQNALILMLAQAGCYVPARAARIGVADRLYSRVGAADDLARGRSTFMAEMIETAAILNQATARSFVILDEIGRGTATFDGLSIAWAAAEHLHAVNGCRALFATHYHELTRLADDLDAAGNVSLKAREWKGELVFLHEVGSGAADRSYGIEVARRAGLPRVSVKRAQAILARLEADGAPAAALTDLPLFALSEPEPEPVISEVETRLGEIDPDALSPREALEVLYALKAMTKKT.

An ATP-binding site is contributed by 654–661; the sequence is GPNMAGKS.

Belongs to the DNA mismatch repair MutS family.

In terms of biological role, this protein is involved in the repair of mismatches in DNA. It is possible that it carries out the mismatch recognition step. This protein has a weak ATPase activity. The sequence is that of DNA mismatch repair protein MutS from Maricaulis maris (strain MCS10) (Caulobacter maris).